Reading from the N-terminus, the 224-residue chain is Inhibitor of apoptosis protein (224 aa).

The BIR repeat unit spans residues V29–M92. Zn(2+) is bound by residues C62, C65, H82, and C89. A C4-type zinc finger spans residues C189 to C207.

Belongs to the asfivirus IAP family. Interacts with subunit p17 of host CASP3.

Its subcellular location is the host cytoplasm. It localises to the virion. In terms of biological role, prevent apoptosis of host cell by inhibiting caspase-3/CASP3 activation to promote the viral replication. Also induces the activation of host NF-kappaB. The chain is Inhibitor of apoptosis protein from Ornithodoros (relapsing fever ticks).